Here is a 298-residue protein sequence, read N- to C-terminus: Protein FAM221A (298 aa).

Over residues serine 241 to serine 257 the composition is skewed to polar residues. The tract at residues serine 241–glutamate 263 is disordered.

The protein belongs to the FAM221 family.

In Homo sapiens (Human), this protein is Protein FAM221A (FAM221A).